We begin with the raw amino-acid sequence, 541 residues long: Testis-specific chromodomain protein Y 2 (541 aa).

The region spanning 6 to 66 (FEVEAIVDKR…RQTEKQKKLT (61 aa)) is the Chromo domain. The disordered stretch occupies residues 72–104 (RIFSNNARRRTSRSTKANYSKNSPKTPVTDKHH). Residues 87–97 (KANYSKNSPKT) show a composition bias toward polar residues.

As to expression, testis specific.

The protein resides in the nucleus. It catalyses the reaction L-lysyl-[protein] + acetyl-CoA = N(6)-acetyl-L-lysyl-[protein] + CoA + H(+). In terms of biological role, may have histone acetyltransferase activity. The polypeptide is Testis-specific chromodomain protein Y 2 (CDY2A) (Homo sapiens (Human)).